We begin with the raw amino-acid sequence, 346 residues long: UDP-N-acetylenolpyruvoylglucosamine reductase (346 aa).

An FAD-binding PCMH-type domain is found at Leu-18 to His-189. Arg-165 is a catalytic residue. The active-site Proton donor is Ser-240. Residue Glu-336 is part of the active site.

The protein belongs to the MurB family. FAD serves as cofactor.

The protein localises to the cytoplasm. The enzyme catalyses UDP-N-acetyl-alpha-D-muramate + NADP(+) = UDP-N-acetyl-3-O-(1-carboxyvinyl)-alpha-D-glucosamine + NADPH + H(+). It participates in cell wall biogenesis; peptidoglycan biosynthesis. Functionally, cell wall formation. This chain is UDP-N-acetylenolpyruvoylglucosamine reductase, found in Neisseria gonorrhoeae (strain ATCC 700825 / FA 1090).